We begin with the raw amino-acid sequence, 229 residues long: Sperm flagellar protein 1 (229 aa).

Positions 7 to 115 (EETMQELYTW…TLRQKIEEKQ (109 aa)) constitute a Calponin-homology (CH) domain. Positions 122-169 (ADLSQDQATQNNGNTHSDKGYKSNGTELSPRQGARVDPASKTHQGYAQ) are disordered. Polar residues predominate over residues 123–136 (DLSQDQATQNNGNT). An essential for homodimerization and microtubule bundling activity region spans residues 178–229 (RFQLAEKEQTLILSQETIQILQAKLRRLEQLLLLKNVRIDDLTRRLQELEKK).

In terms of assembly, homodimer.

It localises to the cytoplasm. It is found in the cytoskeleton. The protein localises to the cilium axoneme. Its subcellular location is the apical cell membrane. Microtubule-associated protein involved in the stabilization of microtubules along the axis of migration during radial intercalation. Promotes the establishment and stabilization of an axis of microtubules required for the active migration of cells into the outer epithelium. Microtubule-associated protein that promotes microtubule bundling and stabilizes microtubules against depolymerization in response to cold shock. Essential for ciliary central apparatus formation which requires both its microtubule-binding and bundling activities. Regulates planar cell polarity signaling pathway and asymmetric microtubule accumulation in ciliated epithelia. This Xenopus laevis (African clawed frog) protein is Sperm flagellar protein 1.